The following is a 174-amino-acid chain: NADPH-dependent 7-cyano-7-deazaguanine reductase (174 aa).

C72 acts as the Thioimide intermediate in catalysis. The active-site Proton donor is the D79. Residues 94–96 and 113–114 contribute to the substrate site; these read VES and HE.

It belongs to the GTP cyclohydrolase I family. QueF type 1 subfamily.

It is found in the cytoplasm. The catalysed reaction is 7-aminomethyl-7-carbaguanine + 2 NADP(+) = 7-cyano-7-deazaguanine + 2 NADPH + 3 H(+). It functions in the pathway tRNA modification; tRNA-queuosine biosynthesis. Catalyzes the NADPH-dependent reduction of 7-cyano-7-deazaguanine (preQ0) to 7-aminomethyl-7-deazaguanine (preQ1). The protein is NADPH-dependent 7-cyano-7-deazaguanine reductase of Synechococcus elongatus (strain ATCC 33912 / PCC 7942 / FACHB-805) (Anacystis nidulans R2).